The chain runs to 81 residues: Cytotoxin I-like T-15 (81 aa).

The signal sequence occupies residues 1–21 (MKTLLLTLVVVTIVCLDLGYT). 4 disulfides stabilise this stretch: C24–C42, C35–C59, C63–C74, and C75–C80.

Belongs to the three-finger toxin family. Short-chain subfamily. Type IA cytotoxin sub-subfamily. In terms of assembly, monomer in solution; Homodimer and oligomer in the presence of negatively charged lipids forming a pore with a size ranging between 20 and 30 Angstroms. Expressed by the venom gland.

The protein localises to the secreted. It is found in the target cell membrane. Functionally, shows cytolytic activity on many different cells by forming pore in lipid membranes. In vivo, increases heart rate or kills the animal by cardiac arrest. In addition, it binds to heparin with high affinity, interacts with Kv channel-interacting protein 1 (KCNIP1) in a calcium-independent manner, and binds to integrin alpha-V/beta-3 (ITGAV/ITGB3) with moderate affinity. In Naja atra (Chinese cobra), this protein is Cytotoxin I-like T-15.